The primary structure comprises 483 residues: Glutamyl-tRNA(Gln) amidotransferase subunit A (483 aa).

Residues lysine 77 and serine 152 each act as charge relay system in the active site. Catalysis depends on serine 176, which acts as the Acyl-ester intermediate.

The protein belongs to the amidase family. GatA subfamily. In terms of assembly, heterotrimer of A, B and C subunits.

It carries out the reaction L-glutamyl-tRNA(Gln) + L-glutamine + ATP + H2O = L-glutaminyl-tRNA(Gln) + L-glutamate + ADP + phosphate + H(+). Allows the formation of correctly charged Gln-tRNA(Gln) through the transamidation of misacylated Glu-tRNA(Gln) in organisms which lack glutaminyl-tRNA synthetase. The reaction takes place in the presence of glutamine and ATP through an activated gamma-phospho-Glu-tRNA(Gln). In Listeria monocytogenes serotype 4b (strain F2365), this protein is Glutamyl-tRNA(Gln) amidotransferase subunit A.